The sequence spans 103 residues: MSQRKPWEIIIRPIITEKSNRLMEDYNKYTFEVALDASKPEIKYAVEKLFNVKVKKVNTMIVKPKKKRVWNKFRQYGTTKKWKKAIVTLEKGHKIDILEFAQK.

The protein belongs to the universal ribosomal protein uL23 family. Part of the 50S ribosomal subunit. Contacts protein L29, and trigger factor when it is bound to the ribosome.

In terms of biological role, one of the early assembly proteins it binds 23S rRNA. One of the proteins that surrounds the polypeptide exit tunnel on the outside of the ribosome. Forms the main docking site for trigger factor binding to the ribosome. This is Large ribosomal subunit protein uL23 from Aquifex aeolicus (strain VF5).